The following is a 287-amino-acid chain: 2-dehydro-3-deoxyphosphooctonate aldolase (287 aa).

It belongs to the KdsA family.

The protein localises to the cytoplasm. The catalysed reaction is D-arabinose 5-phosphate + phosphoenolpyruvate + H2O = 3-deoxy-alpha-D-manno-2-octulosonate-8-phosphate + phosphate. The protein operates within carbohydrate biosynthesis; 3-deoxy-D-manno-octulosonate biosynthesis; 3-deoxy-D-manno-octulosonate from D-ribulose 5-phosphate: step 2/3. It functions in the pathway bacterial outer membrane biogenesis; lipopolysaccharide biosynthesis. This chain is 2-dehydro-3-deoxyphosphooctonate aldolase, found in Rhodopseudomonas palustris (strain BisB5).